Here is a 596-residue protein sequence, read N- to C-terminus: uncharacterized protein (596 aa).

The tract at residues 1–31 (MSTSNDPVVSSHDPIKQEKEQETDLEAQVEH) is disordered. The Cytoplasmic portion of the chain corresponds to 1 to 37 (MSTSNDPVVSSHDPIKQEKEQETDLEAQVEHKKRNER). Residues 13 to 22 (DPIKQEKEQE) are compositionally biased toward basic and acidic residues. The chain crosses the membrane as a helical span at residues 38–58 (GNAFVGFLILIFVYYLLRGGS). The Lumenal portion of the chain corresponds to 59-596 (NDNDKQEMSH…ILVSDSGEEA (538 aa)). A glycan (N-linked (GlcNAc...) asparagine) is linked at asparagine 118. Histidine 197 contacts Zn(2+). Aspartate 199 is a catalytic residue. Aspartate 232 is a binding site for Zn(2+). Glutamate 266 functions as the Proton acceptor in the catalytic mechanism. Positions 267 and 295 each coordinate Zn(2+). 3 N-linked (GlcNAc...) asparagine glycosylation sites follow: asparagine 466, asparagine 541, and asparagine 555. Position 565 (histidine 565) interacts with Zn(2+).

This sequence belongs to the peptidase M20A family. It depends on Zn(2+) as a cofactor.

The protein resides in the vacuole membrane. This is an uncharacterized protein from Schizosaccharomyces pombe (strain 972 / ATCC 24843) (Fission yeast).